The sequence spans 402 residues: MAKEKFSRNKPHVNIGTIGHVDHGKTTLTAAISAVLAVKYGGEMKDYDQIDNAPEERERGITIATSHIEYETAKRHYAHVDCPGHADYVKNMITGAAQMDGAILVIASTDGPMAQTREHILLSKQVGVPYIVVFMNKEDQLDPQDKEEMLELVEMEIRELLSTYDFPGDDTPIIAGSAFQALEEAKAGAVGPWGEKIVALMDAVDEYIPTPERDIDQAFLMPVEDVFSISGRGTVVTGRIEKGTIKVGEEIEIVGFGDTRKTTVTGVEMFRKEMDQGQAGDNCGILLRGIKKEDVERGQVLVKPGTITPHTKFRCEVYILSKEEGGRHTPFFSGYRPQFYVRTTDVTGSCTLPEGTEMVMPGDNVEMTVELVAPIALDKGTKFAIREGGRTVGAGVVAEIIA.

One can recognise a tr-type G domain in the interval 10-212 (KPHVNIGTIG…AVDEYIPTPE (203 aa)). Residues 19-26 (GHVDHGKT) are G1. GTP is bound at residue 19 to 26 (GHVDHGKT). Mg(2+) is bound at residue Thr-26. The interval 60–64 (GITIA) is G2. The segment at 81–84 (DCPG) is G3. GTP contacts are provided by residues 81 to 85 (DCPGH) and 136 to 139 (NKED). The segment at 136–139 (NKED) is G4. Residues 177–179 (SAF) are G5.

Belongs to the TRAFAC class translation factor GTPase superfamily. Classic translation factor GTPase family. EF-Tu/EF-1A subfamily. In terms of assembly, monomer.

Its subcellular location is the cytoplasm. The enzyme catalyses GTP + H2O = GDP + phosphate + H(+). In terms of biological role, GTP hydrolase that promotes the GTP-dependent binding of aminoacyl-tRNA to the A-site of ribosomes during protein biosynthesis. The polypeptide is Elongation factor Tu (Aliarcobacter butzleri (strain RM4018) (Arcobacter butzleri)).